We begin with the raw amino-acid sequence, 426 residues long: Glutamate-1-semialdehyde 2,1-aminomutase (426 aa).

Lys265 carries the N6-(pyridoxal phosphate)lysine modification.

This sequence belongs to the class-III pyridoxal-phosphate-dependent aminotransferase family. HemL subfamily. As to quaternary structure, homodimer. Pyridoxal 5'-phosphate serves as cofactor.

It is found in the cytoplasm. The enzyme catalyses (S)-4-amino-5-oxopentanoate = 5-aminolevulinate. It participates in porphyrin-containing compound metabolism; protoporphyrin-IX biosynthesis; 5-aminolevulinate from L-glutamyl-tRNA(Glu): step 2/2. The polypeptide is Glutamate-1-semialdehyde 2,1-aminomutase (Salmonella arizonae (strain ATCC BAA-731 / CDC346-86 / RSK2980)).